We begin with the raw amino-acid sequence, 293 residues long: Probable xyloglucan endotransglucosylase/hydrolase protein B (293 aa).

Positions 1 to 21 (MASSLLILCLVLVSLASSALC) are cleaved as a signal peptide. One can recognise a GH16 domain in the interval 23–220 (APRRPVDVPF…WSKAPFVAEY (198 aa)). E106 functions as the Nucleophile in the catalytic mechanism. The Proton donor role is filled by E110. Position 110 (E110) interacts with xyloglucan. N-linked (GlcNAc...) asparagine glycosylation occurs at N114. Residues 123-125 (QTN), 133-135 (DRE), 199-200 (DW), and G204 each bind xyloglucan. 2 disulfide bridges follow: C228–C237 and C274–C287. R279 lines the xyloglucan pocket.

The protein belongs to the glycosyl hydrolase 16 family. XTH group 1 subfamily. In terms of processing, contains at least one intrachain disulfide bond essential for its enzymatic activity. In terms of tissue distribution, predominantly expressed in the phloem fibers of growing internodes. Weakly or not expressed in the xylem. In the internode, it is expressed closer to the bottom of the internode compared to XTHA.

Its subcellular location is the secreted. It is found in the cell wall. It localises to the extracellular space. The protein localises to the apoplast. The enzyme catalyses breaks a beta-(1-&gt;4) bond in the backbone of a xyloglucan and transfers the xyloglucanyl segment on to O-4 of the non-reducing terminal glucose residue of an acceptor, which can be a xyloglucan or an oligosaccharide of xyloglucan.. In terms of biological role, catalyzes xyloglucan endohydrolysis (XEH) and/or endotransglycosylation (XET). Cleaves and religates xyloglucan polymers, an essential constituent of the primary cell wall, and thereby participates in cell wall construction of growing tissues. The protein is Probable xyloglucan endotransglucosylase/hydrolase protein B (XTHB) of Phaseolus angularis (Azuki bean).